Consider the following 388-residue polypeptide: Deoxyuridine 5'-triphosphate nucleotidohydrolase (388 aa).

Residues 77–88 are compositionally biased toward basic and acidic residues; that stretch reads EEKYDKEQHPGE. Disordered stretches follow at residues 77 to 96 and 336 to 388; these read EEKY…SPLP and THTP…PRHP. Over residues 351–363 the composition is skewed to acidic residues; the sequence is VDDDVDETEEDEK.

It belongs to the dUTPase family. Requires Mg(2+) as cofactor.

The enzyme catalyses dUTP + H2O = dUMP + diphosphate + H(+). It functions in the pathway pyrimidine metabolism; dUMP biosynthesis; dUMP from dCTP (dUTP route): step 2/2. Its function is as follows. Involved in nucleotide metabolism: produces dUMP, the immediate precursor of thymidine nucleotides and decreases the intracellular concentration of dUTP to avoid uracil incorporation into viral DNA. This is Deoxyuridine 5'-triphosphate nucleotidohydrolase from Homo sapiens (Human).